Consider the following 101-residue polypeptide: Small ribosomal subunit protein uS14A (101 aa).

The disordered stretch occupies residues 31-59; it reads IRSPASSPEQRVAAQSELNRQPRDASAVR.

Belongs to the universal ribosomal protein uS14 family. In terms of assembly, part of the 30S ribosomal subunit. Contacts proteins S3 and S10.

Its function is as follows. Binds 16S rRNA, required for the assembly of 30S particles and may also be responsible for determining the conformation of the 16S rRNA at the A site. The polypeptide is Small ribosomal subunit protein uS14A (Mycobacteroides abscessus (strain ATCC 19977 / DSM 44196 / CCUG 20993 / CIP 104536 / JCM 13569 / NCTC 13031 / TMC 1543 / L948) (Mycobacterium abscessus)).